We begin with the raw amino-acid sequence, 285 residues long: Dihydropteroate synthase (285 aa).

Residues 18-276 (PKIMGIVNLT…DVKATADALK (259 aa)) form the Pterin-binding domain. N25 contributes to the Mg(2+) binding site. Residues T66, D99, N119, D190, K229, and 264-266 (RVH) each bind (7,8-dihydropterin-6-yl)methyl diphosphate.

This sequence belongs to the DHPS family. In terms of assembly, homodimer. It depends on Mg(2+) as a cofactor.

It carries out the reaction (7,8-dihydropterin-6-yl)methyl diphosphate + 4-aminobenzoate = 7,8-dihydropteroate + diphosphate. The protein operates within cofactor biosynthesis; tetrahydrofolate biosynthesis; 7,8-dihydrofolate from 2-amino-4-hydroxy-6-hydroxymethyl-7,8-dihydropteridine diphosphate and 4-aminobenzoate: step 1/2. Catalyzes the condensation of para-aminobenzoate (pABA) with 6-hydroxymethyl-7,8-dihydropterin diphosphate (DHPt-PP) to form 7,8-dihydropteroate (H2Pte), the immediate precursor of folate derivatives. In Neisseria meningitidis serogroup B (strain ATCC BAA-335 / MC58), this protein is Dihydropteroate synthase (folP).